The sequence spans 220 residues: Peptide methionine sulfoxide reductase MsrA (220 aa).

Cys59 is an active-site residue.

Belongs to the MsrA Met sulfoxide reductase family.

The catalysed reaction is L-methionyl-[protein] + [thioredoxin]-disulfide + H2O = L-methionyl-(S)-S-oxide-[protein] + [thioredoxin]-dithiol. It carries out the reaction [thioredoxin]-disulfide + L-methionine + H2O = L-methionine (S)-S-oxide + [thioredoxin]-dithiol. In terms of biological role, has an important function as a repair enzyme for proteins that have been inactivated by oxidation. Catalyzes the reversible oxidation-reduction of methionine sulfoxide in proteins to methionine. The protein is Peptide methionine sulfoxide reductase MsrA of Corynebacterium kroppenstedtii (strain DSM 44385 / JCM 11950 / CIP 105744 / CCUG 35717).